We begin with the raw amino-acid sequence, 498 residues long: NAC domain-containing protein 75 (498 aa).

One can recognise an NAC domain in the interval 48–215 (LPAGVKFDPT…ELVVSKIFYQ (168 aa)). A DNA-binding region spans residues 166–221 (KGCKKILVLYTNFGKNRKPEKTNWVMHQYHLGTHEEEKEGELVVSKIFYQTQPRQC). 4 disordered regions span residues 225–278 (SSTS…PNRS), 338–374 (VMAEQHRHRHQPSSSTSHHMAHDHHHHHHQQQQQRHH), 423–443 (QQQLRQEGEEEHNDGKMGGRS), and 457–498 (STTH…DHHG). Positions 233 to 248 (IGGGGGEASSGGGGGE) are enriched in gly residues. Over residues 256–266 (GTTSGGSCSSS) the composition is skewed to low complexity. Over residues 356–374 (HMAHDHHHHHHQQQQQRHH) the composition is skewed to basic residues. Residues 466–475 (GSSSMGNQQE) are compositionally biased toward polar residues.

Expressed in the vascular cylinder of roots. Expressed in the differentiation zone of the root stele.

Its subcellular location is the nucleus. Functionally, transcription activator involved in xylem formation. Promotes the expression of the secondary wall-associated transcription factor MYB46. Functions upstream of NAC030/VND7, a master switch of xylem vessel differentiation. Acts as a upstream regulator of NAC101/VND6 and LBD30/ASL19. In Arabidopsis thaliana (Mouse-ear cress), this protein is NAC domain-containing protein 75.